The chain runs to 709 residues: F-box only protein 40 (709 aa).

A TRAF-type zinc finger spans residues 53–112 (EHQLLCPLEQVPCLNSEYGCPLSMSRHKLAKHLQVCPASVVCCSMEWNRWPNVDSETTLH). The tract at residues 232–280 (TNSSASCESKNKNDSEKEQISSGHNMVEGEGAPKKKEPQENQKQQDVRT) is disordered. Composition is skewed to basic and acidic residues over residues 240-250 (SKNKNDSEKEQ) and 262-277 (GAPK…KQQD). Residues 570–624 (QNSLTSLPLEILKYIAGFLDSVSLAQLSQVSVLMRNICATLLQERGMVLLQWKKK) form the F-box domain.

In terms of assembly, directly interacts with SKP1 and CUL1. As to expression, expressed only in heart and skeletal muscle.

Its subcellular location is the cytoplasm. Probable substrate-recognition component of the SCF (SKP1-CUL1-F-box protein)-type E3 ubiquitin ligase complex that may function in myogenesis. The chain is F-box only protein 40 (FBXO40) from Homo sapiens (Human).